The sequence spans 54 residues: Ovomucoid (54 aa).

The Kazal-like domain maps to 4–54; it reads VDCSDYPKPVCPLDYMPLCGSDSKTYSNKCNFCNAVVESSGTLTLRHFGKC. Cystine bridges form between cysteine 6-cysteine 36, cysteine 14-cysteine 33, and cysteine 22-cysteine 54.

This is the only ovomucoid third domain known to be not glycosylated.

It localises to the secreted. This chain is Ovomucoid, found in Struthio camelus (Common ostrich).